Here is a 170-residue protein sequence, read N- to C-terminus: MALLPILEFPDPRLRTKAALIEAAEVTTPAFQELIDNMFLTMYDAPGIGLAATQVDVHKRFMVIDVSEEKNEPHVFINPEIVAKDGGRVYQEGCLSVPGIFADVTRADTITVKYLDRNGQEQQMEAGDVLATCIQHEMDHLDGKLFIDYLSPLKREMVRKKLAKQRKHVA.

Residues C94 and H136 each coordinate Fe cation. The active site involves E137. H140 is a Fe cation binding site.

Belongs to the polypeptide deformylase family. Requires Fe(2+) as cofactor.

The catalysed reaction is N-terminal N-formyl-L-methionyl-[peptide] + H2O = N-terminal L-methionyl-[peptide] + formate. Its function is as follows. Removes the formyl group from the N-terminal Met of newly synthesized proteins. Requires at least a dipeptide for an efficient rate of reaction. N-terminal L-methionine is a prerequisite for activity but the enzyme has broad specificity at other positions. This is Peptide deformylase from Stenotrophomonas maltophilia (strain K279a).